A 460-amino-acid chain; its full sequence is Methionine aminopeptidase 2-1 (460 aa).

The disordered stretch occupies residues 1 to 90 (MGSKSPNGED…SAQAAQQTAP (90 aa)). Residues 30-39 (SAAASGLLRG) are compositionally biased toward low complexity. Residues 42–52 (EDQDEDGDDDE) are compositionally biased toward acidic residues. Residues 69–81 (TKKRRRNNKKKKS) are compositionally biased toward basic residues. His-212 provides a ligand contact to substrate. Residues Asp-233, Asp-244, and His-313 each contribute to the a divalent metal cation site. Residue His-321 coordinates substrate. Residues Glu-346 and Glu-441 each contribute to the a divalent metal cation site.

It belongs to the peptidase M24A family. Methionine aminopeptidase eukaryotic type 2 subfamily. Co(2+) serves as cofactor. It depends on Zn(2+) as a cofactor. Requires Mn(2+) as cofactor. Fe(2+) is required as a cofactor.

It localises to the cytoplasm. It carries out the reaction Release of N-terminal amino acids, preferentially methionine, from peptides and arylamides.. Its function is as follows. Cotranslationally removes the N-terminal methionine from nascent proteins. The N-terminal methionine is often cleaved when the second residue in the primary sequence is small and uncharged (Met-Ala-, Cys, Gly, Pro, Ser, Thr, or Val). This chain is Methionine aminopeptidase 2-1, found in Leptosphaeria maculans (strain JN3 / isolate v23.1.3 / race Av1-4-5-6-7-8) (Blackleg fungus).